Consider the following 142-residue polypeptide: MKTFVAKPETVKRDWYVVDATGKTLGRLATELARRLRGKHKAEYTPHVDTGDYIIVINADKVAVTGRKETDKLYYWHTGYVGGIKQATFKEMIARRPEAVIEIAVKGMLPKGPLGRAMFRKLKVYAGGEHQHAAQQPQVLDI.

The protein belongs to the universal ribosomal protein uL13 family. Part of the 50S ribosomal subunit.

This protein is one of the early assembly proteins of the 50S ribosomal subunit, although it is not seen to bind rRNA by itself. It is important during the early stages of 50S assembly. This Haemophilus influenzae (strain PittGG) protein is Large ribosomal subunit protein uL13.